A 461-amino-acid polypeptide reads, in one-letter code: Cysteine--tRNA ligase (461 aa).

Cys-29 lines the Zn(2+) pocket. Residues 31 to 41 carry the 'HIGH' region motif; it reads MTVYDFCHIGH. The Zn(2+) site is built by Cys-210, His-235, and Glu-239. Positions 267–271 match the 'KMSKS' region motif; it reads KMSKS. ATP is bound at residue Lys-270.

It belongs to the class-I aminoacyl-tRNA synthetase family. In terms of assembly, monomer. Zn(2+) is required as a cofactor.

It is found in the cytoplasm. The catalysed reaction is tRNA(Cys) + L-cysteine + ATP = L-cysteinyl-tRNA(Cys) + AMP + diphosphate. The polypeptide is Cysteine--tRNA ligase (Azotobacter vinelandii (strain DJ / ATCC BAA-1303)).